The primary structure comprises 376 residues: MAKRDYYEVLGISKSASADEIKKAYRKLSKQYHPDINKEAGADEKFKEISEAYEVLSDSQKRAQYDQYGHVDPNQGFGGGAGGGFSGGGFSGFEDIFDTFFGGGGRQQDPNAPRQGSDLQYTMRLKFKEAVFGKDAEIEIPREENCDTCHGSGAKPGTTPEKCSHCGGKGSINVEQNTPFGRVVNKRTCQYCNGTGKEIKEKCSTCHGKGRVTKTKKIKVKVPAGVNDGQQMRVSGEGEAGINGGPNGDLYVVFVVIPDEFFEREADDIYVEVPITFVQATLGDEIDVPTVHGKVRLKIPSGTQTGTTFRLRGKGVPHLRGNGTGDQHVIVKVIVPKKLDDKQKEILREFASTTGDRVDEQTSGFFDKMKRAFKGD.

The J domain occupies 5-69 (DYYEVLGISK…QKRAQYDQYG (65 aa)). The CR-type zinc finger occupies 133–215 (GKDAEIEIPR…CHGKGRVTKT (83 aa)). 8 residues coordinate Zn(2+): C146, C149, C163, C166, C189, C192, C203, and C206. CXXCXGXG motif repeat units lie at residues 146-153 (CDTCHGSG), 163-170 (CSHCGGKG), 189-196 (CQYCNGTG), and 203-210 (CSTCHGKG).

Belongs to the DnaJ family. In terms of assembly, homodimer. It depends on Zn(2+) as a cofactor.

Its subcellular location is the cytoplasm. Participates actively in the response to hyperosmotic and heat shock by preventing the aggregation of stress-denatured proteins and by disaggregating proteins, also in an autonomous, DnaK-independent fashion. Unfolded proteins bind initially to DnaJ; upon interaction with the DnaJ-bound protein, DnaK hydrolyzes its bound ATP, resulting in the formation of a stable complex. GrpE releases ADP from DnaK; ATP binding to DnaK triggers the release of the substrate protein, thus completing the reaction cycle. Several rounds of ATP-dependent interactions between DnaJ, DnaK and GrpE are required for fully efficient folding. Also involved, together with DnaK and GrpE, in the DNA replication of plasmids through activation of initiation proteins. This chain is Chaperone protein DnaJ, found in Listeria welshimeri serovar 6b (strain ATCC 35897 / DSM 20650 / CCUG 15529 / CIP 8149 / NCTC 11857 / SLCC 5334 / V8).